Consider the following 201-residue polypeptide: dCTP deaminase, dUMP-forming (201 aa).

Residues 117–122, Asp135, 143–145, Gln163, Tyr177, and Gln188 each bind dCTP; these read RSSFGR and TLE. The active-site Proton donor/acceptor is the Glu145.

This sequence belongs to the dCTP deaminase family. As to quaternary structure, homotrimer.

The catalysed reaction is dCTP + 2 H2O = dUMP + NH4(+) + diphosphate. It functions in the pathway pyrimidine metabolism; dUMP biosynthesis; dUMP from dCTP: step 1/1. In terms of biological role, bifunctional enzyme that catalyzes both the deamination of dCTP to dUTP and the hydrolysis of dUTP to dUMP without releasing the toxic dUTP intermediate. This is dCTP deaminase, dUMP-forming from Methanococcus aeolicus (strain ATCC BAA-1280 / DSM 17508 / OCM 812 / Nankai-3).